Consider the following 287-residue polypeptide: Thymidylate synthase (287 aa).

Arginine 21 is a binding site for dUMP. Asparagine 51 provides a ligand contact to (6R)-5,10-methylene-5,6,7,8-tetrahydrofolate. Arginine 150 to arginine 151 is a binding site for dUMP. Cysteine 170 acts as the Nucleophile in catalysis. Residues arginine 190–aspartate 193, asparagine 201, and histidine 231–tyrosine 233 each bind dUMP. Aspartate 193 serves as a coordination point for (6R)-5,10-methylene-5,6,7,8-tetrahydrofolate. Residue alanine 286 coordinates (6R)-5,10-methylene-5,6,7,8-tetrahydrofolate.

It belongs to the thymidylate synthase family. Bacterial-type ThyA subfamily. Homodimer.

The protein resides in the cytoplasm. It carries out the reaction dUMP + (6R)-5,10-methylene-5,6,7,8-tetrahydrofolate = 7,8-dihydrofolate + dTMP. It functions in the pathway pyrimidine metabolism; dTTP biosynthesis. Functionally, catalyzes the reductive methylation of 2'-deoxyuridine-5'-monophosphate (dUMP) to 2'-deoxythymidine-5'-monophosphate (dTMP) while utilizing 5,10-methylenetetrahydrofolate (mTHF) as the methyl donor and reductant in the reaction, yielding dihydrofolate (DHF) as a by-product. This enzymatic reaction provides an intracellular de novo source of dTMP, an essential precursor for DNA biosynthesis. This Mycoplasma genitalium (strain ATCC 33530 / DSM 19775 / NCTC 10195 / G37) (Mycoplasmoides genitalium) protein is Thymidylate synthase.